Reading from the N-terminus, the 252-residue chain is Major prion protein (252 aa).

Positions 1 to 22 (MANLGYWMLVLFVATWSDLGLC) are cleaved as a signal peptide. The interval 23-229 (KKRPKPGGWN…ESQAYYQRGS (207 aa)) is interaction with GRB2, ERI3 and SYN1. The segment at 26 to 104 (PKPGGWNTGG…HNQWNKPSKP (79 aa)) is disordered. 5 repeat units span residues 51–58 (PQGGGWGQ), 59–66 (PHGGGWGQ), 67–74 (PHGGGWGQ), 75–82 (PHGGGWGQ), and 83–90 (PHGGGWGQ). Residues 51-90 (PQGGGWGQPHGGGWGQPHGGGWGQPHGGGWGQPHGGGWGQ) are 5 X 8 AA tandem repeats of P-H-G-G-G-W-G-Q. Positions 52–92 (QGGGWGQPHGGGWGQPHGGGWGQPHGGGWGQPHGGGWGQAG) are enriched in gly residues. 12 residues coordinate Cu(2+): His-60, Gly-61, Gly-62, His-68, Gly-69, Gly-70, His-76, Gly-77, Gly-78, His-84, Gly-85, and Gly-86. Cys-178 and Cys-213 are joined by a disulfide. Asn-180 and Asn-196 each carry an N-linked (GlcNAc...) asparagine glycan. Ser-229 is lipidated: GPI-anchor amidated serine. A propeptide spans 230-252 (SMVLFSSPPVILLISFLIFLIVG) (removed in mature form).

The protein belongs to the prion family. As to quaternary structure, monomer and homodimer. Has a tendency to aggregate into amyloid fibrils containing a cross-beta spine, formed by a steric zipper of superposed beta-strands. Soluble oligomers may represent an intermediate stage on the path to fibril formation. Copper binding may promote oligomerization. Interacts with GRB2, APP, ERI3/PRNPIP and SYN1. Mislocalized cytosolically exposed PrP interacts with MGRN1; this interaction alters MGRN1 subcellular location and causes lysosomal enlargement. Interacts with KIAA1191.

Its subcellular location is the cell membrane. The protein localises to the golgi apparatus. In terms of biological role, its primary physiological function is unclear. Has cytoprotective activity against internal or environmental stresses. May play a role in neuronal development and synaptic plasticity. May be required for neuronal myelin sheath maintenance. May play a role in iron uptake and iron homeostasis. Soluble oligomers are toxic to cultured neuroblastoma cells and induce apoptosis (in vitro). Association with GPC1 (via its heparan sulfate chains) targets PRNP to lipid rafts. Also provides Cu(2+) or Zn(2+) for the ascorbate-mediated GPC1 deaminase degradation of its heparan sulfate side chains. This chain is Major prion protein (PRNP), found in Ateles paniscus (Black spider monkey).